A 348-amino-acid chain; its full sequence is Keratocan (348 aa).

The signal sequence occupies residues Met-1–Ser-26. The LRRNT domain occupies Ala-40–Pro-69. 2 disulfide bridges follow: Cys-41–Cys-47 and Cys-45–Cys-57. LRR repeat units follow at residues Pro-70 to Asn-92, Ala-93 to Ala-118, Met-119 to Pro-140, Ala-141 to Gly-163, Gly-165 to Gly-189, Leu-190 to Thr-213, Thr-215 to Gly-234, Leu-235 to Leu-260, Ser-262 to Ser-280, and Ser-281 to Pro-303. An N-linked (GlcNAc...) (keratan sulfate) asparagine glycan is attached at Asn-92. An N-linked (GlcNAc...) (keratan sulfate) asparagine glycan is attached at Asn-259. Residue Asn-297 is glycosylated (N-linked (GlcNAc...) asparagine). The cysteines at positions 302 and 339 are disulfide-linked.

Belongs to the small leucine-rich proteoglycan (SLRP) family. SLRP class II subfamily. Post-translationally, glycosylated. Contains keratan sulfate chains. Expressed in eye, where it is found in the corneal epithelial layer and to a lesser extent in the stromal layer (at protein level).

Its subcellular location is the secreted. The protein resides in the extracellular space. It localises to the extracellular matrix. May be important in developing and maintaining corneal transparency and for the structure of the stromal matrix. The polypeptide is Keratocan (Danio rerio (Zebrafish)).